Reading from the N-terminus, the 340-residue chain is Protein RecA (340 aa).

An ATP-binding site is contributed by 74 to 81 (GPESSGKT).

The protein belongs to the RecA family.

It localises to the cytoplasm. Its function is as follows. Can catalyze the hydrolysis of ATP in the presence of single-stranded DNA, the ATP-dependent uptake of single-stranded DNA by duplex DNA, and the ATP-dependent hybridization of homologous single-stranded DNAs. It interacts with LexA causing its activation and leading to its autocatalytic cleavage. This Porphyromonas gingivalis (strain ATCC 33277 / DSM 20709 / CIP 103683 / JCM 12257 / NCTC 11834 / 2561) protein is Protein RecA.